The chain runs to 206 residues: High frequency lysogenization protein HflD homolog (206 aa).

It belongs to the HflD family.

It localises to the cytoplasm. The protein localises to the cell inner membrane. In Marinobacter nauticus (strain ATCC 700491 / DSM 11845 / VT8) (Marinobacter aquaeolei), this protein is High frequency lysogenization protein HflD homolog.